Consider the following 199-residue polypeptide: Pectinesterase inhibitor 4 (199 aa).

Residues 1-25 (MLRFVVLSLTLMVFINSSNFPKTAA) form the signal peptide. N-linked (GlcNAc...) asparagine glycosylation is found at Asn16, Asn33, Asn43, and Asn83. A disulfide bond links Cys42 and Cys51. A disulfide bridge connects residues Cys109 and Cys158.

Belongs to the PMEI family. As to quaternary structure, binds reversibly to PME3 to inhibit its activity; the stability of the PME3-PMEI4 complex and the inhibition of the pectin methylesterase (PME) activity is pH-dependent, based on protonation status of amino-acids at the complex interface. In terms of tissue distribution, expressed in outer cell layer of roots, particularly in the root-hair zone. Expressed in roots and siliques.

The protein localises to the secreted. Its subcellular location is the extracellular space. The protein resides in the apoplast. Its function is as follows. Pectin methylesterase (PME) inhibitor that can target the root-expressed PME17 and PME3 in a pH-dependent manner, mainly in slightly acidic conditions (pH 6.3 and 5.0) but not at pH 7.5; this processus relies on changes in the protonation of amino acids involved in intermolecular and intramolecular interactions. Regulate de-methylesterification of pectins in roots and affects root growth. In Arabidopsis thaliana (Mouse-ear cress), this protein is Pectinesterase inhibitor 4.